A 293-amino-acid chain; its full sequence is Methylsterol monooxygenase 1 (293 aa).

Helical transmembrane passes span 55 to 75 (LIVH…FQFI) and 100 to 120 (VLLF…YYFT). The Fatty acid hydroxylase domain occupies 145 to 274 (CAVIEDTWHY…FTWWDRIFGT (130 aa)). The Histidine box-1 signature appears at 157-161 (HRLLH). A Histidine box-2 motif is present at residues 170 to 174 (HKVHH). Residues 199-219 (FFIGIVLLCDHVILLWAWVTI) traverse the membrane as a helical segment. The Histidine box-3 signature appears at 249-255 (HHDFHHM).

The protein belongs to the sterol desaturase family. Requires Fe cation as cofactor. Post-translationally, ubiquitinated by MARCHF6, leading to proteasomal degradation.

Its subcellular location is the endoplasmic reticulum membrane. It catalyses the reaction 4,4-dimethyl-5alpha-cholest-7-en-3beta-ol + 6 Fe(II)-[cytochrome b5] + 3 O2 + 5 H(+) = 4alpha-carboxy-4beta-methyl-5alpha-cholest-7-ene-3beta-ol + 6 Fe(III)-[cytochrome b5] + 4 H2O. The enzyme catalyses 4,4-dimethyl-5alpha-cholesta-8,24-dien-3beta-ol + 6 Fe(II)-[cytochrome b5] + 3 O2 + 5 H(+) = 4beta-methylzymosterol-4alpha-carboxylate + 6 Fe(III)-[cytochrome b5] + 4 H2O. The catalysed reaction is 4alpha-methylzymosterol + 6 Fe(II)-[cytochrome b5] + 3 O2 + 5 H(+) = 4alpha-carboxyzymosterol + 6 Fe(III)-[cytochrome b5] + 4 H2O. It carries out the reaction 4alpha-methyl-5alpha-cholest-7-en-3beta-ol + 6 Fe(II)-[cytochrome b5] + 3 O2 + 5 H(+) = 4alpha-carboxy-5alpha-cholest-7-en-3beta-ol + 6 Fe(III)-[cytochrome b5] + 4 H2O. It catalyses the reaction 4,4-dimethyl-5alpha-cholest-8-en-3beta-ol + 6 Fe(II)-[cytochrome b5] + 3 O2 + 5 H(+) = 4alpha-carboxy-4beta-methyl-5alpha-cholest-8-en-3beta-ol + 6 Fe(III)-[cytochrome b5] + 4 H2O. The enzyme catalyses 4alpha-methyl-5alpha-cholest-8-en-3beta-ol + 6 Fe(II)-[cytochrome b5] + 3 O2 + 5 H(+) = 4alpha-carboxy-5alpha-cholest-8-ene-3beta-ol + 6 Fe(III)-[cytochrome b5] + 4 H2O. Its pathway is steroid biosynthesis; zymosterol biosynthesis; zymosterol from lanosterol: step 3/6. The protein operates within steroid biosynthesis; cholesterol biosynthesis. In terms of biological role, catalyzes the three-step monooxygenation required for the demethylation of 4,4-dimethyl and 4alpha-methylsterols, which can be subsequently metabolized to cholesterol. The protein is Methylsterol monooxygenase 1 (MSMO1) of Pongo abelii (Sumatran orangutan).